We begin with the raw amino-acid sequence, 494 residues long: Cytochrome P450 2B11 (494 aa).

Serine 128 carries the phosphoserine; by PKA modification. Heme is bound at residue cysteine 436.

It belongs to the cytochrome P450 family. The cofactor is heme.

It localises to the endoplasmic reticulum membrane. The protein localises to the microsome membrane. It catalyses the reaction an organic molecule + reduced [NADPH--hemoprotein reductase] + O2 = an alcohol + oxidized [NADPH--hemoprotein reductase] + H2O + H(+). Functionally, cytochromes P450 are a group of heme-thiolate monooxygenases. In liver microsomes, this enzyme is involved in an NADPH-dependent electron transport pathway. This isozyme seems responsible for metabolism of 2,2',4,4',5,5'-hexachlorobiphenyl. The protein is Cytochrome P450 2B11 (CYP2B11) of Canis lupus familiaris (Dog).